The primary structure comprises 104 residues: Defensin-2 (104 aa).

A signal peptide spans 1-19; that stretch reads MKFFVLFAILIAIVHASCA. Disulfide bonds link cysteine 64–cysteine 95, cysteine 81–cysteine 100, and cysteine 85–cysteine 102.

The protein belongs to the invertebrate defensin family. Type 1 subfamily. As to expression, low expression in head and thorax.

The protein resides in the secreted. Its function is as follows. Antibacterial peptide mostly active against Gram-positive bacteria. The polypeptide is Defensin-2 (Apis mellifera (Honeybee)).